We begin with the raw amino-acid sequence, 338 residues long: N-acetylmuramate/N-acetylglucosamine kinase (338 aa).

Belongs to the kinase AmgK family.

It catalyses the reaction N-acetyl-D-muramate + ATP = N-acetyl-alpha-D-muramate 1-phosphate + ADP + H(+). The enzyme catalyses N-acetyl-D-glucosamine + ATP = N-acetyl-alpha-D-glucosamine 1-phosphate + ADP + H(+). It functions in the pathway cell wall biogenesis; peptidoglycan recycling. Its function is as follows. Sugar kinase that catalyzes the ATP-dependent phosphorylation of N-acetylmuramate (MurNAc) and N-acetylglucosamine (GlcNAc) at its C1 hydroxyl group, leading to MurNAc alpha-1P and GlcNAc alpha-1P, respectively. Is involved in peptidoglycan recycling as part of a cell wall recycling pathway that bypasses de novo biosynthesis of the peptidoglycan precursor UDP-MurNAc. Plays a role in intrinsic resistance to fosfomycin, which targets the de novo synthesis of UDP-MurNAc. This Pseudomonas aeruginosa (strain ATCC 15692 / DSM 22644 / CIP 104116 / JCM 14847 / LMG 12228 / 1C / PRS 101 / PAO1) protein is N-acetylmuramate/N-acetylglucosamine kinase.